Consider the following 436-residue polypeptide: Trigger factor (436 aa).

In terms of domain architecture, PPIase FKBP-type spans 163–248; that stretch reads GDRVTVDFEG…LKKIEAAHLP (86 aa).

This sequence belongs to the FKBP-type PPIase family. Tig subfamily.

It localises to the cytoplasm. It carries out the reaction [protein]-peptidylproline (omega=180) = [protein]-peptidylproline (omega=0). In terms of biological role, involved in protein export. Acts as a chaperone by maintaining the newly synthesized protein in an open conformation. Functions as a peptidyl-prolyl cis-trans isomerase. The sequence is that of Trigger factor from Albidiferax ferrireducens (strain ATCC BAA-621 / DSM 15236 / T118) (Rhodoferax ferrireducens).